Here is a 420-residue protein sequence, read N- to C-terminus: Serine hydroxymethyltransferase (420 aa).

Residues leucine 121 and 125–127 contribute to the (6S)-5,6,7,8-tetrahydrofolate site; that span reads GHL. Lysine 230 carries the N6-(pyridoxal phosphate)lysine modification. (6S)-5,6,7,8-tetrahydrofolate contacts are provided by residues glutamate 246 and 354–356; that span reads SPF.

Belongs to the SHMT family. Homodimer. It depends on pyridoxal 5'-phosphate as a cofactor.

The protein localises to the cytoplasm. It carries out the reaction (6R)-5,10-methylene-5,6,7,8-tetrahydrofolate + glycine + H2O = (6S)-5,6,7,8-tetrahydrofolate + L-serine. The protein operates within one-carbon metabolism; tetrahydrofolate interconversion. It functions in the pathway amino-acid biosynthesis; glycine biosynthesis; glycine from L-serine: step 1/1. Functionally, catalyzes the reversible interconversion of serine and glycine with tetrahydrofolate (THF) serving as the one-carbon carrier. This reaction serves as the major source of one-carbon groups required for the biosynthesis of purines, thymidylate, methionine, and other important biomolecules. Also exhibits THF-independent aldolase activity toward beta-hydroxyamino acids, producing glycine and aldehydes, via a retro-aldol mechanism. This chain is Serine hydroxymethyltransferase, found in Rickettsia prowazekii (strain Madrid E).